The chain runs to 430 residues: Tol-Pal system protein TolB (430 aa).

A signal peptide spans 1 to 21 (MKQALRVAFGFLMLWAAVLHA).

The protein belongs to the TolB family. In terms of assembly, the Tol-Pal system is composed of five core proteins: the inner membrane proteins TolA, TolQ and TolR, the periplasmic protein TolB and the outer membrane protein Pal. They form a network linking the inner and outer membranes and the peptidoglycan layer.

Its subcellular location is the periplasm. In terms of biological role, part of the Tol-Pal system, which plays a role in outer membrane invagination during cell division and is important for maintaining outer membrane integrity. TolB occupies a key intermediary position in the Tol-Pal system because it communicates directly with both membrane-embedded components, Pal in the outer membrane and TolA in the inner membrane. This chain is Tol-Pal system protein TolB, found in Salmonella choleraesuis (strain SC-B67).